The following is a 466-amino-acid chain: Glutamate--tRNA ligase 1 (466 aa).

A 'HIGH' region motif is present at residues proline 9–glycine 19. The 'KMSKS' region motif lies at lysine 238–arginine 242. Lysine 241 provides a ligand contact to ATP.

It belongs to the class-I aminoacyl-tRNA synthetase family. Glutamate--tRNA ligase type 1 subfamily. In terms of assembly, monomer.

Its subcellular location is the cytoplasm. It catalyses the reaction tRNA(Glu) + L-glutamate + ATP = L-glutamyl-tRNA(Glu) + AMP + diphosphate. Functionally, catalyzes the attachment of glutamate to tRNA(Glu) in a two-step reaction: glutamate is first activated by ATP to form Glu-AMP and then transferred to the acceptor end of tRNA(Glu). In Acidiphilium cryptum (strain JF-5), this protein is Glutamate--tRNA ligase 1.